A 609-amino-acid chain; its full sequence is Rhotekin-2 (609 aa).

One can recognise an REM-1 domain in the interval Ser5–Asn81. Residues Lys56 to Glu91 are a coiled coil. The 108-residue stretch at Glu286–Phe393 folds into the PH domain. Disordered regions lie at residues His495–Ser520 and Lys554–Val609. Residues Arg569 to Phe582 are compositionally biased toward basic and acidic residues.

As to expression, expressed in lymphocytes, CD4 positive T-cells and bone marrow-derived cells. Also expressed in lung, colon, thymus and brain.

Functionally, may play an important role in lymphopoiesis. This is Rhotekin-2 (RTKN2) from Homo sapiens (Human).